Reading from the N-terminus, the 804-residue chain is Leucine--tRNA ligase (804 aa).

A 'HIGH' region motif is present at residues 40–51 (PYPSGQGLHVGH). The 'KMSKS' region motif lies at 576–580 (KMSKS). Lys579 serves as a coordination point for ATP.

It belongs to the class-I aminoacyl-tRNA synthetase family.

It localises to the cytoplasm. It catalyses the reaction tRNA(Leu) + L-leucine + ATP = L-leucyl-tRNA(Leu) + AMP + diphosphate. The polypeptide is Leucine--tRNA ligase (Enterococcus faecalis (strain ATCC 700802 / V583)).